The following is a 370-amino-acid chain: Chloromuconate cycloisomerase (370 aa).

Catalysis depends on K165, which acts as the Proton acceptor. The Mn(2+) site is built by D194, E220, and D245. E323 serves as the catalytic Proton donor.

Belongs to the mandelate racemase/muconate lactonizing enzyme family. Mn(2+) is required as a cofactor.

It carries out the reaction 2-[(2R)-2-chloro-2,5-dihydro-5-oxofuryl]acetate = 3-chloro-cis,cis-muconate + H(+). It functions in the pathway aromatic compound metabolism; 3-chlorocatechol degradation. The chain is Chloromuconate cycloisomerase (tcbD) from Pseudomonas sp. (strain P51).